The primary structure comprises 195 residues: Nicotinamide riboside kinase 1 (195 aa).

10–18 (GVTNGGKTT) is an ATP binding site. T17 and D36 together coordinate Mg(2+). Residue D36 is the Proton acceptor of the active site. Substrate is bound by residues 36 to 39 (DDFF) and 55 to 56 (YD). Residue R128 participates in ATP binding. Residues R129 and 134 to 135 (YE) contribute to the substrate site. Residues 132-134 (RVY) and 172-174 (RSE) contribute to the ATP site.

It belongs to the uridine kinase family. NRK subfamily. As to quaternary structure, monomer.

The enzyme catalyses beta-nicotinamide D-riboside + ATP = beta-nicotinamide D-ribonucleotide + ADP + H(+). It catalyses the reaction beta-D-ribosylnicotinate + ATP = nicotinate beta-D-ribonucleotide + ADP + H(+). It functions in the pathway cofactor biosynthesis; NAD(+) biosynthesis. Functionally, catalyzes the phosphorylation of nicotinamide riboside (NR) and nicotinic acid riboside (NaR) to form nicotinamide mononucleotide (NMN) and nicotinic acid mononucleotide (NaMN). The protein is Nicotinamide riboside kinase 1 (Nmrk1) of Mus musculus (Mouse).